A 164-amino-acid polypeptide reads, in one-letter code: Cell division protein SepF (164 aa).

The interval 21–71 (YQQGQQPAQQQQSPVQAVPTPAPAPQQQAKRAPVTPLHKPSTTTRNAAPAE) is disordered. Over residues 22 to 54 (QQGQQPAQQQQSPVQAVPTPAPAPQQQAKRAPV) the composition is skewed to low complexity.

Belongs to the SepF family. Homodimer. Interacts with FtsZ.

The protein localises to the cytoplasm. Its function is as follows. Cell division protein that is part of the divisome complex and is recruited early to the Z-ring. Probably stimulates Z-ring formation, perhaps through the cross-linking of FtsZ protofilaments. Its function overlaps with FtsA. This is Cell division protein SepF from Clavibacter michiganensis subsp. michiganensis (strain NCPPB 382).